The sequence spans 878 residues: Multiple C2 and transmembrane domain-containing protein 2 (878 aa).

Disordered regions lie at residues 20–40 (LINLSKKKAKKSPSKPLDLRV) and 143–178 (KPSLGRDAPEEHDKTHGNDDLNASMTSQHFEEESTL). Residues 149–161 (DAPEEHDKTHGND) show a composition bias toward basic and acidic residues. 3 C2 domains span residues 177 to 292 (TLGE…EHIL), 334 to 452 (SKSS…CLEL), and 486 to 607 (PSER…CYVL). Residues aspartate 210, aspartate 216, aspartate 263, aspartate 265, and aspartate 270 each contribute to the Ca(2+) site. Residues aspartate 525, aspartate 531, aspartate 577, aspartate 579, and aspartate 585 each coordinate Ca(2+). The helical transmembrane segment at 694-714 (FVVFLVTVWNFELYMIPLALL) threads the bilayer. Positions 728-752 (KASSTQDSQESTDVEEEGKEEEKES) are disordered. A compositionally biased stretch (acidic residues) spans 737–746 (ESTDVEEEGK). A helical transmembrane segment spans residues 794-814 (PFLSLLACLILAITTVILYFI).

This sequence belongs to the MCTP family. Ca(2+) serves as cofactor.

It is found in the membrane. In terms of biological role, might play a role in the development of cardiac outflow tract. This chain is Multiple C2 and transmembrane domain-containing protein 2 (Mctp2), found in Mus musculus (Mouse).